The sequence spans 482 residues: 3-isopropylmalate dehydratase large subunit (482 aa).

Cys353, Cys414, and Cys417 together coordinate [4Fe-4S] cluster.

This sequence belongs to the aconitase/IPM isomerase family. LeuC type 1 subfamily. In terms of assembly, heterodimer of LeuC and LeuD. Requires [4Fe-4S] cluster as cofactor.

The catalysed reaction is (2R,3S)-3-isopropylmalate = (2S)-2-isopropylmalate. The protein operates within amino-acid biosynthesis; L-leucine biosynthesis; L-leucine from 3-methyl-2-oxobutanoate: step 2/4. Its function is as follows. Catalyzes the isomerization between 2-isopropylmalate and 3-isopropylmalate, via the formation of 2-isopropylmaleate. The polypeptide is 3-isopropylmalate dehydratase large subunit (Xanthomonas oryzae pv. oryzae (strain MAFF 311018)).